Here is a 138-residue protein sequence, read N- to C-terminus: Centromere protein S (138 aa).

At M1 the chain carries N-acetylmethionine. The segment at 112-138 (AKKKKKLEDENRNSVESAEAGVEESEN) is disordered.

The protein belongs to the TAF9 family. CENP-S/MHF1 subfamily. In terms of assembly, heterodimer with CENPX, sometimes called MHF; this interaction stabilizes both partners. MHF heterodimers can assemble to form tetrameric structures. MHF also coassemble with CENPT-CENPW heterodimers at centromeres to form the tetrameric CENP-T-W-S-X complex. Forms a discrete complex with FANCM and CENPX, called FANCM-MHF; this interaction, probably mediated by direct binding between CENPS and FANCM, leads to synergistic activation of double-stranded DNA binding and strongly stimulates FANCM-mediated DNA remodeling. Recruited by FANCM to the Fanconi anemia (FA) core complex, which consists of CENPS, CENPX, FANCA, FANCB, FANCC, FANCE, FANCF, FANCG, FANCL, FANCM, FAAP24 and FAAP100. The FA core complex associates with Bloom syndrome (BLM) complex, which consists of at least BLM, DNA topoisomerase 3-alpha (TOP3A), RMI1/BLAP75, RPA1/RPA70 and RPA2/RPA32. The super complex between FA and BLM is called BRAFT. Component of the CENPA-CAD complex, composed of CENPI, CENPK, CENPL, CENPO, CENPP, CENPQ, CENPR and CENPS. The CENPA-CAD complex is probably recruited on centromeres by the CENPA-NAC complex, at least composed of CENPA, CENPC, CENPH, CENPM, CENPN, CENPT and CENPU.

It localises to the nucleus. It is found in the chromosome. Its subcellular location is the centromere. The protein localises to the kinetochore. Its function is as follows. DNA-binding component of the Fanconi anemia (FA) core complex. Required for the normal activation of the FA pathway, leading to monoubiquitination of the FANCI-FANCD2 complex in response to DNA damage, cellular resistance to DNA cross-linking drugs, and prevention of chromosomal breakage. In complex with CENPX (MHF heterodimer), crucial cofactor for FANCM in both binding and ATP-dependent remodeling of DNA. Stabilizes FANCM. In complex with CENPX and FANCM (but not other FANC proteins), rapidly recruited to blocked forks and promotes gene conversion at blocked replication forks. In complex with CENPT, CENPW and CENPX (CENP-T-W-S-X heterotetramer), involved in the formation of a functional kinetochore outer plate, which is essential for kinetochore-microtubule attachment and faithful mitotic progression. As a component of MHF and CENP-T-W-S-X complexes, binds DNA and bends it to form a nucleosome-like structure. DNA-binding function is fulfilled in the presence of CENPX, with the following preference for DNA substates: Holliday junction &gt; double-stranded &gt; splay arm &gt; single-stranded. Does not bind DNA on its own. The sequence is that of Centromere protein S (CENPS) from Bos taurus (Bovine).